We begin with the raw amino-acid sequence, 374 residues long: MDLYQQGLQPLLFSALKADPETVHRQLMRTCAWLDRNVDQGLAQGLQRRLASSLQVEDPRLSQSLWGLSFANPIGLAAGFDKDGVATNIWPRFGFGFAEVGTVTFHAQPGNPQPRLFRLPEDQAALNRMGFNNQGAAAMAKVIAASLDRQARSYPLGINLGKSKVTPLEQAVADYVGSFQLLKTYGDYFVVNVSSPNTPGLRSLQAVEQLAPILAGLQAENTEGKPLLVKIAPDLEWKDIAAIVDLAQVHQLAGIIATNTTIRRDLKTERIAATGNVPSEEAGGISGAPVRSRSTDVIRFIHKQTQGQLPIIGVGGIFTAEDAWEKLCAGASLLQVYTGWVYEGPWMVRRILEGLLVKMQEEGIQQLSEIVGQK.

FMN contacts are provided by residues 78–82 and threonine 102; that span reads AGFDK. Residue lysine 82 coordinates substrate. 127-131 serves as a coordination point for substrate; it reads NRMGF. Residues asparagine 159 and asparagine 192 each contribute to the FMN site. Asparagine 192 contacts substrate. Serine 195 (nucleophile) is an active-site residue. Residue asparagine 197 participates in substrate binding. The FMN site is built by lysine 230 and threonine 258. Residue 259 to 260 coordinates substrate; it reads NT. Residues glycine 287, glycine 316, and 337–338 contribute to the FMN site; that span reads YT.

It belongs to the dihydroorotate dehydrogenase family. Type 2 subfamily. In terms of assembly, monomer. FMN serves as cofactor.

It localises to the cell membrane. The enzyme catalyses (S)-dihydroorotate + a quinone = orotate + a quinol. The protein operates within pyrimidine metabolism; UMP biosynthesis via de novo pathway; orotate from (S)-dihydroorotate (quinone route): step 1/1. Functionally, catalyzes the conversion of dihydroorotate to orotate with quinone as electron acceptor. The polypeptide is Dihydroorotate dehydrogenase (quinone) (Acaryochloris marina (strain MBIC 11017)).